The chain runs to 216 residues: GTP cyclohydrolase 1 2 (216 aa).

It belongs to the GTP cyclohydrolase I family. As to quaternary structure, homomer.

The enzyme catalyses GTP + H2O = 7,8-dihydroneopterin 3'-triphosphate + formate + H(+). It participates in cofactor biosynthesis; 7,8-dihydroneopterin triphosphate biosynthesis; 7,8-dihydroneopterin triphosphate from GTP: step 1/1. The chain is GTP cyclohydrolase 1 2 (folE2) from Nostoc sp. (strain PCC 7120 / SAG 25.82 / UTEX 2576).